Consider the following 24-residue polypeptide: Brevinin-1Ba (24 aa).

Residues C18 and C24 are joined by a disulfide bond.

In terms of tissue distribution, expressed by the skin glands.

Its subcellular location is the secreted. Its function is as follows. Antibacterial activity against Gram-positive bacterium S.aureus. This is Brevinin-1Ba from Lithobates berlandieri (Rio Grande leopard frog).